The chain runs to 285 residues: Pantothenate synthetase (285 aa).

ATP is bound at residue 30-37 (MGNLHAGH). Residue His-37 is the Proton donor of the active site. Gln-61 contributes to the (R)-pantoate binding site. Gln-61 contributes to the beta-alanine binding site. 149–152 (GEKD) lines the ATP pocket. Gln-155 is a binding site for (R)-pantoate. 186–189 (LSSR) contributes to the ATP binding site.

Belongs to the pantothenate synthetase family. In terms of assembly, homodimer.

Its subcellular location is the cytoplasm. The enzyme catalyses (R)-pantoate + beta-alanine + ATP = (R)-pantothenate + AMP + diphosphate + H(+). Its pathway is cofactor biosynthesis; (R)-pantothenate biosynthesis; (R)-pantothenate from (R)-pantoate and beta-alanine: step 1/1. Catalyzes the condensation of pantoate with beta-alanine in an ATP-dependent reaction via a pantoyl-adenylate intermediate. The protein is Pantothenate synthetase of Ectopseudomonas mendocina (strain ymp) (Pseudomonas mendocina).